The chain runs to 258 residues: Neurotrophin-3 (258 aa).

Residues 1 to 18 form the signal peptide; sequence MSILFYVIFLAYLRGIQG. Positions 19-139 are excised as a propeptide; sequence NNMDQRSLPE…TNRTSPRRKR (121 aa). The disordered stretch occupies residues 60-85; it reads QSTLPKAEAPREPEQGEATRSEFQPM. Residues 67–79 are compositionally biased toward basic and acidic residues; the sequence is EAPREPEQGEATR. The N-linked (GlcNAc...) asparagine glycan is linked to N131. 3 disulfides stabilise this stretch: C153–C218, C196–C247, and C206–C249.

It belongs to the NGF-beta family. In terms of tissue distribution, brain and peripheral tissues.

The protein resides in the secreted. Seems to promote the survival of visceral and proprioceptive sensory neurons. The sequence is that of Neurotrophin-3 (Ntf3) from Rattus norvegicus (Rat).